We begin with the raw amino-acid sequence, 591 residues long: ADP-ribosylating toxin CARDS (591 aa).

A mono-ADP ribosyltransferase (mART) domain region spans residues 1–205; sequence MPNPVRFVYR…LPTPGIATPV (205 aa). Residues 206 to 256 form an NAD(+)-binding pocket region; that stretch reads HLSIPQAASVADVSEGTSASLSFACPDWSPPSSNGENPLDKCIAEKIDNYN. Cysteines 230 and 247 form a disulfide. The KELED motif, involved in host ER trafficking, solvent exposed in the crystal structure motif lies at 268 to 272; sequence KELED. The D2 domain stretch occupies residues 273–439; the sequence is TPVYLRGIKT…QFVTMRAAST (167 aa). A D3 domain region spans residues 440-591; sequence FFVDVQLGWY…ILVKDGFDRF (152 aa).

This sequence belongs to the bacterial exotoxin subunit A family. As to quaternary structure, monomer. Binds to host (human) pulmonary surfactant-associated protein A1 (SFTPA1), the major mammalian protein component of pulmonary surfactant. Binds to host (human) surface annexin A2 (ANXA2) on the cell surface; anti-ANXA2 antibodies decrease binding to cells. Interacts with cytosolic host (human) NLRP3, which it ADP-ribosylates in vitro. Post-translationally, 8 hours after treatment of HeLa cells with purified protein, a substantial amount is processed to 2 nearly equal-sized fragments. The disulfide bond between Cys-230 and Cys-247 is required to for the toxin to exert its mART and vacuolating activities within target cells, and for protein processing. Acidic pH in the endosome and retrograde transport are required for toxin cleavage, which is required for both toxin activities. Trypsin treatment under mild conditions leads to cleavage at Lys-305 and Lys-307; the 2 proteins fragments remain associated and can be internalized and vacuolate HeLa cells.

It localises to the cell membrane. Its subcellular location is the cytoplasm. The protein resides in the cell surface. It is found in the cell projection. The protein localises to the attachment organelle. It localises to the host cytoplasm. Its subcellular location is the host cytosol. The protein resides in the host endoplasmic reticulum. With respect to regulation, in vitro ADP-ribosylation is enhanced by dithiotheritol. Its function is as follows. The main virulence factor for this bacteria, a mono-ADP-ribosylating toxin (mART), that transfers the ADP-ribosyl group from NAD(+) to multiple target proteins in vitro. Also elicits cytopathic effects in mammalian cells, such as disorganization and disruption of respiratory epithelial integrity in tracheal epithelium and vacuolization in the cytoplasm of CHO and HeLa cells as well as in mice and baboons. Treatment of mice or baboons with CARDS elicits a response that is consistent with human M.pneumoniae infections and mouse models of both infection and intoxication, suggesting that CARDS toxin is sufficient to cause prolonged inflammatory responses and airway dysfunction. Treatment of baboons with CARDS induces a number of cytokines; G-CSF (40 fold), IL-1Ra (10 fold), IL-6 and IL-8 (333 and 100 fold, respectively), MIP-1a (5 fold), and RANTES (9 fold). Treatment of mice gives a similar response. Binds phosphatidyl choline, dipalmitoylphosphatidylcholine (DPPC) and sphingomyelin via domains D2 plus D3. Has at least 2 host receptors SFTPA1 and ANXA2. Internalized by a clathrin-mediated process; protein is rapidly taken up at 37 degrees Celsius. Clathrin-independent or caveolin-dependent endocytosis were not detected. In HeLa cells internalized CARDS trafficks toward the nucleus by retrograde transport from early to late endosomes, then the Golgi apparatus; at 16 hours most toxin is concentrated in the perinuclear region in the host endoplasmic reticulum (ER). Failure to localize to the host ER prevents ADP-ribosylation and vacuolization. An acidic compartment is required to mediate retrotransport and processing of toxin into an N-terminal fragment with mART activity and a C-terminal fragment that is able to induce vacuolization. In terms of biological role, induces the host NLRP3 inflammasome to release interleukin-1 beta (IL-1 beta); IL-1 beta release requires ADP-ribosylation activity and uptake by host macrophages. In the host colocalizes with the NLRP3 inflammasome; ADP-ribosylates NLRP3 in vitro. ADP-ribosylation of NLRP3 may lead to hyperinflammation. The sequence is that of ADP-ribosylating toxin CARDS from Mycoplasma pneumoniae (strain ATCC 29342 / M129 / Subtype 1) (Mycoplasmoides pneumoniae).